The following is an 870-amino-acid chain: MEFDLEFFRENNFVRKQCSVCSSYFWTLDDKRSTCGDPACNGYSFINKSPVYKKYNVDEMRDEFIKFFENDSLPHKFVEPYPVVPRWRDDVLLVNASIYDFQPQVTSGLAKPPGNPIVMSQPSIRMLDIDLVGKTGRHLTSFEMLCHDSFNYDDNYIYWKDETVRYSFRFLTERLRVDPLLITYKEKPWFGGGNAGNALEVFVMGLEVATLVFMDLKEDKNGDIELEGTRYSRMPLRVVDTGYGLERLVWLSTGTPTVYESIYKRSLDYIIKNSNAEYVSPEIMARISEIAAEIDPYSDELVLSRINKTGDKKFMEMLDNIRSAYGLVDHARTLLLMFSDYVIPSNVKVGYLARMLLRRSFRFMEKIKFNGSINDIFDAVYDEFNKIIKNYDKDFINNIIKIETEKYKEMLRSAPEIIRKHINKNTISNENIAKIYDTYGIPLEIISKVFKDLTNKELDIPENFQEYLVKLHENVKKPEKTVKDYPDINTRPLYYNDTGIMEFTGIVMYSNGNEIILNQTAFYPEGGGQPADHGYFLYNGKKIEVLDVQKYGNSIVHIINGSIPGHSRIKGFVDKERRTQLMIHHSATHLLLGICRAYFGEHVWQNSVKKDIDESRLDITHYKKITEDDIKNIENMCLDAIMASKNIHVKNIEWNRAISEYGFRLFEGGFPLSDTIRVVTIDDIDSEGCGGTHLKNTKDILMLKIVSTETVQEGIQRIVFTAGPAALRYSQKLYSIINDEQEYLKVPPEKIPEQSIKLVRENIENKKMINSLERELAEIYIKNALRIDDESFYIKSNEILSRVILKYTGARNGRFIINTGSRIYISSSYNDADVIASMLSNNYSGSKRVAICDCNANENLIKEILVKIKR.

Positions 585, 589, 689, and 693 each coordinate Zn(2+).

The protein belongs to the class-II aminoacyl-tRNA synthetase family. Requires Zn(2+) as cofactor.

The protein localises to the cytoplasm. The enzyme catalyses tRNA(Ala) + L-alanine + ATP = L-alanyl-tRNA(Ala) + AMP + diphosphate. Its function is as follows. Catalyzes the attachment of alanine to tRNA(Ala) in a two-step reaction: alanine is first activated by ATP to form Ala-AMP and then transferred to the acceptor end of tRNA(Ala). Also edits incorrectly charged Ser-tRNA(Ala) and Gly-tRNA(Ala) via its editing domain. The chain is Alanine--tRNA ligase from Picrophilus torridus (strain ATCC 700027 / DSM 9790 / JCM 10055 / NBRC 100828 / KAW 2/3).